We begin with the raw amino-acid sequence, 176 residues long: Protein MOTHER of FT and TFL1 homolog 1 (176 aa).

It belongs to the phosphatidylethanolamine-binding protein family.

Its function is as follows. May form complexes with phosphorylated ligands by interfering with kinases and their effectors. The polypeptide is Protein MOTHER of FT and TFL1 homolog 1 (Oryza sativa subsp. japonica (Rice)).